The following is a 545-amino-acid chain: Acetamidase (545 aa).

Catalysis depends on charge relay system residues lysine 130 and serine 205. Serine 229 serves as the catalytic Acyl-ester intermediate.

It belongs to the amidase family.

It carries out the reaction a monocarboxylic acid amide + H2O = a monocarboxylate + NH4(+). The catalysed reaction is acetamide + H2O = acetate + NH4(+). Functionally, allows acetamide to be used as a sole carbon or nitrogen source. In Aspergillus oryzae (strain ATCC 42149 / RIB 40) (Yellow koji mold), this protein is Acetamidase (amdS).